We begin with the raw amino-acid sequence, 119 residues long: Immunoglobulin heavy variable 3-73 (119 aa).

The N-terminal stretch at 1-19 (MEFGLSWVFLVAILKGVQC) is a signal peptide. A framework-1 region spans residues 20-44 (EVQLVESGGGLVQPGGSLKLSCAAS). The region spanning 20–119 (EVQLVESGGG…EDTAVYYCTR (100 aa)) is the Ig-like domain. An intrachain disulfide couples Cys-41 to Cys-117. The interval 45 to 52 (GFTFSGSA) is complementarity-determining-1. The segment at 53-69 (MHWVRQASGKGLEWVGR) is framework-2. The complementarity-determining-2 stretch occupies residues 70–79 (IRSKANSYAT). The tract at residues 80–117 (AYAASVKGRFTISRDDSKNTAYLQMNSLKTEDTAVYYC) is framework-3. Positions 118–119 (TR) are complementarity-determining-3.

As to quaternary structure, immunoglobulins are composed of two identical heavy chains and two identical light chains; disulfide-linked.

It is found in the secreted. Its subcellular location is the cell membrane. V region of the variable domain of immunoglobulin heavy chains that participates in the antigen recognition. Immunoglobulins, also known as antibodies, are membrane-bound or secreted glycoproteins produced by B lymphocytes. In the recognition phase of humoral immunity, the membrane-bound immunoglobulins serve as receptors which, upon binding of a specific antigen, trigger the clonal expansion and differentiation of B lymphocytes into immunoglobulins-secreting plasma cells. Secreted immunoglobulins mediate the effector phase of humoral immunity, which results in the elimination of bound antigens. The antigen binding site is formed by the variable domain of one heavy chain, together with that of its associated light chain. Thus, each immunoglobulin has two antigen binding sites with remarkable affinity for a particular antigen. The variable domains are assembled by a process called V-(D)-J rearrangement and can then be subjected to somatic hypermutations which, after exposure to antigen and selection, allow affinity maturation for a particular antigen. The sequence is that of Immunoglobulin heavy variable 3-73 from Homo sapiens (Human).